We begin with the raw amino-acid sequence, 273 residues long: Formamidopyrimidine-DNA glycosylase (273 aa).

P2 (schiff-base intermediate with DNA) is an active-site residue. E3 acts as the Proton donor in catalysis. Residue K58 is the Proton donor; for beta-elimination activity of the active site. The DNA site is built by H92, R111, and K153. The segment at 238–272 (KVYGREGQSCLSCSSTIIKIKHSGRSTFYCKTCQY) adopts an FPG-type zinc-finger fold. R262 (proton donor; for delta-elimination activity) is an active-site residue.

It belongs to the FPG family. In terms of assembly, monomer. It depends on Zn(2+) as a cofactor.

The enzyme catalyses Hydrolysis of DNA containing ring-opened 7-methylguanine residues, releasing 2,6-diamino-4-hydroxy-5-(N-methyl)formamidopyrimidine.. It catalyses the reaction 2'-deoxyribonucleotide-(2'-deoxyribose 5'-phosphate)-2'-deoxyribonucleotide-DNA = a 3'-end 2'-deoxyribonucleotide-(2,3-dehydro-2,3-deoxyribose 5'-phosphate)-DNA + a 5'-end 5'-phospho-2'-deoxyribonucleoside-DNA + H(+). In terms of biological role, involved in base excision repair of DNA damaged by oxidation or by mutagenic agents. Acts as a DNA glycosylase that recognizes and removes damaged bases. Has a preference for oxidized purines, such as 7,8-dihydro-8-oxoguanine (8-oxoG). Has AP (apurinic/apyrimidinic) lyase activity and introduces nicks in the DNA strand. Cleaves the DNA backbone by beta-delta elimination to generate a single-strand break at the site of the removed base with both 3'- and 5'-phosphates. In Rickettsia peacockii (strain Rustic), this protein is Formamidopyrimidine-DNA glycosylase.